The sequence spans 82 residues: MKHPLETLTTAAGILLMAFLSCLLLPAPALGLALAQKLVTMFHLMDLSQLYTLLFCLWFLVLGAIEYFVLRFIWRRWFSLAD.

2 consecutive transmembrane segments (helical) span residues 8–28 (LTTA…LPAP) and 50–70 (LYTL…YFVL).

The protein resides in the cell membrane. This is an uncharacterized protein from Escherichia coli (strain K12).